The chain runs to 135 residues: Small ribosomal subunit protein bS16 (135 aa).

Residues 106-135 (TERRQKRLVVKSRRRQAKKEAEGKAAGAEA) are disordered. The segment covering 109–122 (RQKRLVVKSRRRQA) has biased composition (basic residues).

Belongs to the bacterial ribosomal protein bS16 family.

The chain is Small ribosomal subunit protein bS16 from Chlorobium phaeobacteroides (strain DSM 266 / SMG 266 / 2430).